The following is a 361-amino-acid chain: Phosphoserine aminotransferase (361 aa).

L-glutamate is bound at residue arginine 42. Pyridoxal 5'-phosphate-binding positions include 76–77 (AT), tryptophan 102, threonine 152, aspartate 172, and glutamine 195. An N6-(pyridoxal phosphate)lysine modification is found at lysine 196. 237–238 (NT) serves as a coordination point for pyridoxal 5'-phosphate.

This sequence belongs to the class-V pyridoxal-phosphate-dependent aminotransferase family. SerC subfamily. As to quaternary structure, homodimer. Requires pyridoxal 5'-phosphate as cofactor.

The protein localises to the cytoplasm. The enzyme catalyses O-phospho-L-serine + 2-oxoglutarate = 3-phosphooxypyruvate + L-glutamate. It catalyses the reaction 4-(phosphooxy)-L-threonine + 2-oxoglutarate = (R)-3-hydroxy-2-oxo-4-phosphooxybutanoate + L-glutamate. The protein operates within amino-acid biosynthesis; L-serine biosynthesis; L-serine from 3-phospho-D-glycerate: step 2/3. It functions in the pathway cofactor biosynthesis; pyridoxine 5'-phosphate biosynthesis; pyridoxine 5'-phosphate from D-erythrose 4-phosphate: step 3/5. In terms of biological role, catalyzes the reversible conversion of 3-phosphohydroxypyruvate to phosphoserine and of 3-hydroxy-2-oxo-4-phosphonooxybutanoate to phosphohydroxythreonine. The protein is Phosphoserine aminotransferase of Xanthomonas campestris pv. campestris (strain B100).